Here is a 163-residue protein sequence, read N- to C-terminus: 2-amino-4-hydroxy-6-hydroxymethyldihydropteridine pyrophosphokinase (163 aa).

It belongs to the HPPK family.

It carries out the reaction 6-hydroxymethyl-7,8-dihydropterin + ATP = (7,8-dihydropterin-6-yl)methyl diphosphate + AMP + H(+). It functions in the pathway cofactor biosynthesis; tetrahydrofolate biosynthesis; 2-amino-4-hydroxy-6-hydroxymethyl-7,8-dihydropteridine diphosphate from 7,8-dihydroneopterin triphosphate: step 4/4. Functionally, catalyzes the transfer of pyrophosphate from adenosine triphosphate (ATP) to 6-hydroxymethyl-7,8-dihydropterin, an enzymatic step in folate biosynthesis pathway. The sequence is that of 2-amino-4-hydroxy-6-hydroxymethyldihydropteridine pyrophosphokinase (folK) from Helicobacter pylori (strain ATCC 700392 / 26695) (Campylobacter pylori).